We begin with the raw amino-acid sequence, 283 residues long: NFU1 iron-sulfur cluster scaffold homolog, mitochondrial (283 aa).

The N-terminal 65 residues, 1–65, are a transit peptide targeting the mitochondrion; the sequence is MSKFLSQAAI…ELRMPVACRR (65 aa). The nifU stretch occupies residues 182–250; it reads IKELLDTRIR…IPEVESVEQV (69 aa). [4Fe-4S] cluster is bound by residues Cys-219 and Cys-222.

This sequence belongs to the NifU family.

It localises to the mitochondrion. Molecular scaffold for [Fe-S] cluster assembly of mitochondrial iron-sulfur proteins. The chain is NFU1 iron-sulfur cluster scaffold homolog, mitochondrial from Drosophila sechellia (Fruit fly).